A 396-amino-acid polypeptide reads, in one-letter code: Elongation factor Tu (396 aa).

A tr-type G domain is found at 10–206 (KPHVNVGTIG…ALDSYIPEPE (197 aa)). Positions 19–26 (GHVDHGKT) are G1. 19 to 26 (GHVDHGKT) serves as a coordination point for GTP. T26 is a binding site for Mg(2+). A G2 region spans residues 60–64 (GITIN). Residues 81-84 (DCPG) are G3. GTP contacts are provided by residues 81 to 85 (DCPGH) and 136 to 139 (NKAD). Positions 136–139 (NKAD) are G4. Residues 174–176 (SAL) are G5.

The protein belongs to the TRAFAC class translation factor GTPase superfamily. Classic translation factor GTPase family. EF-Tu/EF-1A subfamily. Monomer.

The protein resides in the cytoplasm. The catalysed reaction is GTP + H2O = GDP + phosphate + H(+). GTP hydrolase that promotes the GTP-dependent binding of aminoacyl-tRNA to the A-site of ribosomes during protein biosynthesis. This is Elongation factor Tu from Nitrosomonas europaea (strain ATCC 19718 / CIP 103999 / KCTC 2705 / NBRC 14298).